Here is a 400-residue protein sequence, read N- to C-terminus: 3-phenylpropionate/cinnamic acid dioxygenase ferredoxin--NAD(+) reductase component (400 aa).

Residue 5–36 (TIIIVGGGQAAAMAAASLRQQGFTGELHLFSD) coordinates FAD. 146-174 (SVVIVGAGTIGLELAASATQRGCKATVIE) contacts NAD(+).

The protein belongs to the bacterial ring-hydroxylating dioxygenase ferredoxin reductase family. As to quaternary structure, this dioxygenase system consists of four proteins: the two subunits of the hydroxylase component (HcaE and HcaF), a ferredoxin (HcaC) and a ferredoxin reductase (HcaD). The cofactor is FAD.

The enzyme catalyses 2 reduced [2Fe-2S]-[ferredoxin] + NAD(+) + H(+) = 2 oxidized [2Fe-2S]-[ferredoxin] + NADH. The protein operates within aromatic compound metabolism; 3-phenylpropanoate degradation. Functionally, part of the multicomponent 3-phenylpropionate dioxygenase, that converts 3-phenylpropionic acid (PP) and cinnamic acid (CI) into 3-phenylpropionate-dihydrodiol (PP-dihydrodiol) and cinnamic acid-dihydrodiol (CI-dihydrodiol), respectively. This is 3-phenylpropionate/cinnamic acid dioxygenase ferredoxin--NAD(+) reductase component from Escherichia coli O7:K1 (strain IAI39 / ExPEC).